The primary structure comprises 227 residues: Ion-translocating oxidoreductase complex subunit E (227 aa).

The next 5 membrane-spanning stretches (helical) occupy residues A34 to S56, I68 to A88, F91 to V111, F127 to I147, and T181 to I201.

The protein belongs to the NqrDE/RnfAE family. As to quaternary structure, the complex is composed of six subunits: RnfA, RnfB, RnfC, RnfD, RnfE and RnfG.

It is found in the cell inner membrane. Functionally, part of a membrane-bound complex that couples electron transfer with translocation of ions across the membrane. The sequence is that of Ion-translocating oxidoreductase complex subunit E from Buchnera aphidicola subsp. Acyrthosiphon pisum (strain 5A).